Here is a 37-residue protein sequence, read N- to C-terminus: Cytochrome b6-f complex subunit 5 (37 aa).

Residues 5-25 (LLSGIVLGLIPITLAGLFVTA) traverse the membrane as a helical segment.

It belongs to the PetG family. As to quaternary structure, the 4 large subunits of the cytochrome b6-f complex are cytochrome b6, subunit IV (17 kDa polypeptide, PetD), cytochrome f and the Rieske protein, while the 4 small subunits are PetG, PetL, PetM and PetN. The complex functions as a dimer.

Its subcellular location is the plastid. It localises to the chloroplast thylakoid membrane. In terms of biological role, component of the cytochrome b6-f complex, which mediates electron transfer between photosystem II (PSII) and photosystem I (PSI), cyclic electron flow around PSI, and state transitions. PetG is required for either the stability or assembly of the cytochrome b6-f complex. The polypeptide is Cytochrome b6-f complex subunit 5 (Cryptomeria japonica (Japanese cedar)).